The following is a 242-amino-acid chain: Probable transcriptional regulatory protein Dred_1658 (242 aa).

Belongs to the TACO1 family.

Its subcellular location is the cytoplasm. This chain is Probable transcriptional regulatory protein Dred_1658, found in Desulforamulus reducens (strain ATCC BAA-1160 / DSM 100696 / MI-1) (Desulfotomaculum reducens).